The chain runs to 397 residues: RNA polymerase II elongation factor ELL3 (397 aa).

Disordered regions lie at residues 164 to 219 (VSDP…KRSV) and 237 to 284 (VPSP…PEDI). Positions 168–178 (LASNQGQSLPG) are enriched in polar residues. A compositionally biased stretch (acidic residues) spans 250–262 (QEGEDWEQEDEDM). The segment covering 269-281 (SSSVQEDSESPSP) has biased composition (low complexity). Positions 285-395 (PDYLLQYRAI…LILEFEEKNR (111 aa)) constitute an OCEL domain.

The protein belongs to the ELL/occludin family. In terms of assembly, interacts with AFF4. Component of the super elongation complex (SEC), at least composed of EAF1, EAF2, CDK9, MLLT3/AF9, AFF (AFF1 or AFF4), the P-TEFb complex and ELL (ELL, ELL2 or ELL3). Component of the little elongation complex (LEC), at least composed of ELL (ELL, ELL2 or ELL3), ZC3H8, ICE1 and ICE2. In terms of tissue distribution, testis specific.

The protein resides in the nucleus. Functionally, enhancer-binding elongation factor that specifically binds enhancers in embryonic stem cells (ES cells), marks them, and is required for their future activation during stem cell specification. Does not only bind to enhancer regions of active genes, but also marks the enhancers that are in a poised or inactive state in ES cells and is required for establishing proper RNA polymerase II occupancy at developmentally regulated genes in a cohesin-dependent manner. Probably required for priming developmentally regulated genes for later recruitment of the super elongation complex (SEC), for transcriptional activation during differentiation. Required for recruitment of P-TEFb within SEC during differentiation. Probably preloaded on germ cell chromatin, suggesting that it may prime gene activation by marking enhancers as early as in the germ cells. Promoting epithelial-mesenchymal transition (EMT). Elongation factor component of the super elongation complex (SEC), a complex required to increase the catalytic rate of RNA polymerase II transcription by suppressing transient pausing by the polymerase at multiple sites along the DNA. Component of the little elongation complex (LEC), a complex required to regulate small nuclear RNA (snRNA) gene transcription by RNA polymerase II and III. This is RNA polymerase II elongation factor ELL3 (ELL3) from Homo sapiens (Human).